The following is a 167-amino-acid chain: Photosystem I assembly protein Ycf3 (167 aa).

3 TPR repeats span residues 35 to 68 (AFTYYRDGMSAQAEGEYAEALQNYYEAMRLEIDP), 72 to 105 (SYILYNIGLIHTSNGEHAKALEYYFQALERNPSL), and 120 to 153 (GEQAIQQQDIESSKAWFNQAAEYWKQAIQLAPGN).

This sequence belongs to the Ycf3 family.

Its subcellular location is the plastid. It is found in the chloroplast thylakoid membrane. In terms of biological role, essential for the assembly of the photosystem I (PSI) complex. May act as a chaperone-like factor to guide the assembly of the PSI subunits. The polypeptide is Photosystem I assembly protein Ycf3 (Chara vulgaris (Common stonewort)).